The sequence spans 28 residues: Conotoxin Cl6a (28 aa).

Intrachain disulfides connect C3-C13, C7-C19, and C12-C24.

As to expression, expressed by the venom duct.

The protein localises to the secreted. This chain is Conotoxin Cl6a, found in Californiconus californicus (California cone).